Here is a 452-residue protein sequence, read N- to C-terminus: LIM/homeobox protein lim-7 (452 aa).

2 consecutive LIM zinc-binding domains span residues 54 to 116 (AVCA…LFTT) and 117 to 179 (RCSR…LDNP). A disordered region spans residues 184–268 (SVPDYSKLNN…KKKDKQATRV (85 aa)). Composition is skewed to low complexity over residues 192–205 (NNNN…SSSN) and 217–227 (TLTSLDNNTSS). The segment at residues 265 to 324 (ATRVRTVLNENQLKILRDCYSINSRPDATLKERLVEMTGLSARVIRVWFQNKRCKDKKRQ) is a DNA-binding region (homeobox). The tract at residues 347-376 (GIGPLMVQPATPHIDNTLGGPIDIQHFAQW) is LIM interaction domain (LID).

As to quaternary structure, interacts (via LID domain) with ceh-14 (via LIM zinc-binding domains 1 and 2). In terms of tissue distribution, expressed in gonadal sheath cells, URA motoneurons, and 10 additional cells near the isthmus and terminal bulb of the pharynx. Expressed in the ALA and BDU cells.

It is found in the nucleus. Its function is as follows. Probable DNA-binding transcriptional activator. This chain is LIM/homeobox protein lim-7, found in Caenorhabditis elegans.